The sequence spans 96 residues: Guanine nucleotide-binding protein alpha-9 subunit (96 aa).

Residues Y2–V96 form the G-alpha domain. A G1 motif region spans residues I9 to D16. GTP-binding positions include N13–D16 and A69. A G2 motif region spans residues T67–T72.

This sequence belongs to the G-alpha family. As to quaternary structure, g proteins are composed of 3 units; alpha, beta and gamma. The alpha chain contains the guanine nucleotide binding site. In terms of tissue distribution, expressed in ASJ neurons.

Its function is as follows. Guanine nucleotide-binding proteins (G proteins) are involved as modulators or transducers in various transmembrane signaling systems. Plays a role in innate immunity and maintaining survival in response to metabolites of E.coli. This might be by regulating the expression and signaling of genes such as lys-8, ins-7 and daf-28. Has a role in lifespan to promote longevity. This chain is Guanine nucleotide-binding protein alpha-9 subunit, found in Caenorhabditis elegans.